A 216-amino-acid polypeptide reads, in one-letter code: RNA chaperone ProQ (216 aa).

Positions 105 to 115 (ESKAKVAEKRK) are enriched in basic and acidic residues. Residues 105–159 (ESKAKVAEKRKAQNAAKPGAKKSYKSKTVPAFKSSPKGTNQDNVKPKAKLPPPEK) are disordered.

Belongs to the ProQ family.

The protein resides in the cytoplasm. Its function is as follows. RNA chaperone with significant RNA binding, RNA strand exchange and RNA duplexing activities. The polypeptide is RNA chaperone ProQ (Pseudoalteromonas atlantica (strain T6c / ATCC BAA-1087)).